The chain runs to 187 residues: Ribonuclease M5 (187 aa).

A Toprim domain is found at 5–88 (KEVIVVEGKD…AFLPRKAGVP (84 aa)). The Mg(2+) site is built by Glu11, Asp57, and Asp59.

This sequence belongs to the ribonuclease M5 family. Requires Mg(2+) as cofactor.

Its subcellular location is the cytoplasm. It carries out the reaction Endonucleolytic cleavage of RNA, removing 21 and 42 nucleotides, respectively, from the 5'- and 3'-termini of a 5S-rRNA precursor.. Functionally, required for correct processing of both the 5' and 3' ends of 5S rRNA precursor. Cleaves both sides of a double-stranded region yielding mature 5S rRNA in one step. This Lactiplantibacillus plantarum (strain ATCC BAA-793 / NCIMB 8826 / WCFS1) (Lactobacillus plantarum) protein is Ribonuclease M5.